A 158-amino-acid chain; its full sequence is Protein GLUTAMINE DUMPER 1 (158 aa).

The Extracellular portion of the chain corresponds to 1-36 (MRPLSVQSKFEDVATSTSVNHHGVTPQSPWHSPVPY). Residues 37-57 (LFGGLAAMLGLIAFALLILAC) traverse the membrane as a helical segment. Topologically, residues 58–158 (SYWRLSSSGE…DTGETTTTSH (101 aa)) are cytoplasmic. A disordered region spans residues 65 to 85 (SGEEDGQNVDEEKESRSGDKA). A compositionally biased stretch (acidic residues) spans 66 to 76 (GEEDGQNVDEE). Positions 96 to 100 (VIMAG) match the VIMAG motif. A disordered region spans residues 126-158 (ISQEESVAKEEEKMREGEEEKVKDTGETTTTSH). The span at 131-151 (SVAKEEEKMREGEEEKVKDTG) shows a compositional bias: basic and acidic residues.

The protein belongs to the GLUTAMINE DUMPER 1 (TC 9.B.60) family. In terms of assembly, interacts with LOG2. In terms of processing, ubiquitinated by LOG2 (in vitro). As to expression, expressed in the vascular tissues and in hydathodes. Expressed in the phloem and xylem (at the protein level).

It localises to the cell membrane. Its function is as follows. Probable subunit of an amino acid transporter involved in the regulation of the amino acid metabolism. Stimulates amino acid export by activating nonselective amino acid facilitators. Required the interaction with the RING-type E3 ubiquitin-protein ligase LOG2 to fulfill its function. Plays a role in the Gln export at hydathodes, at xylem parenchyma into xylem sap and from mesophyll into leaf apoplasm. Acts upstream genes involved in the salicylic acid (SA) pathway and in the geminivirus-host interaction. This is Protein GLUTAMINE DUMPER 1 (GDU1) from Arabidopsis thaliana (Mouse-ear cress).